A 341-amino-acid polypeptide reads, in one-letter code: Serpentine receptor class epsilon-8 (341 aa).

Transmembrane regions (helical) follow at residues 37-57 (VGFLVFSWIEFLYLFYLFIFI), 64-86 (LTFLFMNYGGQYFCSMLSRCIIV), 101-123 (WILVANFARTVCLFIAMYILPIF), 143-163 (IWVSLMILSIFHPLVFASAIA), 169-189 (IPVVVHVISFFIVNIIGYIGI), 235-255 (VQISILFFNIGCCSILLMDHF), and 264-284 (WSYVCFNFFALVYGITVPIIL).

The protein belongs to the nematode receptor-like protein sre family.

The protein localises to the membrane. In Caenorhabditis elegans, this protein is Serpentine receptor class epsilon-8 (sre-8).